We begin with the raw amino-acid sequence, 82 residues long: Small ribosomal subunit protein bS16c (82 aa).

Belongs to the bacterial ribosomal protein bS16 family.

Its subcellular location is the plastid. It is found in the chloroplast. The polypeptide is Small ribosomal subunit protein bS16c (Porphyra purpurea (Red seaweed)).